A 404-amino-acid polypeptide reads, in one-letter code: L-cysteine:1D-myo-inositol 2-amino-2-deoxy-alpha-D-glucopyranoside ligase 1 (404 aa).

Cys-47 contributes to the Zn(2+) binding site. Residues 47–50 (CGIT), Thr-62, and 85–87 (NIT) each bind L-cysteinyl-5'-AMP. A 'HIGH' region motif is present at residues 49–59 (ITPYDSTHLGH). Positions 188–193 (ERGGDP) match the 'ERGGDP' region motif. Trp-228 contributes to the L-cysteinyl-5'-AMP binding site. Zn(2+) is bound at residue Cys-232. 250-252 (GSD) is an L-cysteinyl-5'-AMP binding site. Zn(2+) is bound at residue His-257. Ile-284 serves as a coordination point for L-cysteinyl-5'-AMP. The 'KMSKS' region signature appears at 290–294 (KMSKS).

Belongs to the class-I aminoacyl-tRNA synthetase family. MshC subfamily. In terms of assembly, monomer. It depends on Zn(2+) as a cofactor.

It carries out the reaction 1D-myo-inositol 2-amino-2-deoxy-alpha-D-glucopyranoside + L-cysteine + ATP = 1D-myo-inositol 2-(L-cysteinylamino)-2-deoxy-alpha-D-glucopyranoside + AMP + diphosphate + H(+). In terms of biological role, catalyzes the ATP-dependent condensation of GlcN-Ins and L-cysteine to form L-Cys-GlcN-Ins. The sequence is that of L-cysteine:1D-myo-inositol 2-amino-2-deoxy-alpha-D-glucopyranoside ligase 1 from Corynebacterium jeikeium (strain K411).